The sequence spans 148 residues: WAP four-disulfide core domain protein 6B (148 aa).

An N-terminal signal peptide occupies residues 1 to 35 (MPPNRLLLPKMRLWGLLPFLVPFILLWSIQEPALA). Residues 37-84 (GVFIRTCPKYNKIKCDFEERNQCLRHRECPGEERCCLFACGRKCLDLS) form the WAP domain. Intrachain disulfides connect Cys-43/Cys-72, Cys-51/Cys-76, Cys-59/Cys-71, Cys-65/Cys-80, Cys-88/Cys-138, Cys-97/Cys-121, and Cys-113/Cys-134. The BPTI/Kunitz inhibitor domain occupies 88 to 138 (CSLPQDAGPCLAYLPRWWYNQDTKLCIEFIYGGCQGNPNNFESKAVCTSIC).

The protein resides in the secreted. The chain is WAP four-disulfide core domain protein 6B (Wfdc6b) from Mus musculus (Mouse).